A 77-amino-acid polypeptide reads, in one-letter code: MNNEKNVSFEFIGSTNEVDEIKVMACYAAGSICGEKRGYCSSDPGRYCPWQVVCYESRKICAKNAAKMRMNVTKNTI.

Residues 1–22 (MNNEKNVSFEFIGSTNEVDEIK) form the signal peptide. 3 cysteine pairs are disulfide-bonded: C26–C61, C33–C48, and C40–C54.

Its subcellular location is the secreted. The protein is Pollen allergen Amb p 5b of Ambrosia psilostachya (Western ragweed).